Consider the following 446-residue polypeptide: Phosphoglucosamine mutase (446 aa).

Residue Ser101 is the Phosphoserine intermediate of the active site. Residues Ser101, Asp240, Asp242, and Asp244 each coordinate Mg(2+). Position 101 is a phosphoserine (Ser101).

It belongs to the phosphohexose mutase family. Mg(2+) serves as cofactor. Post-translationally, activated by phosphorylation.

It carries out the reaction alpha-D-glucosamine 1-phosphate = D-glucosamine 6-phosphate. In terms of biological role, catalyzes the conversion of glucosamine-6-phosphate to glucosamine-1-phosphate. This is Phosphoglucosamine mutase from Pseudomonas putida (strain W619).